The chain runs to 401 residues: Phosphoglycerate kinase 3, cytosolic (401 aa).

(2R)-3-phosphoglycerate contacts are provided by Val24, Asp25, Asn27, Arg41, Ser63, His64, Gly66, Arg67, Arg122, His154, and Arg155. Gly200 serves as a coordination point for ADP. Gly200 is a CDP binding site. Lys202 and Lys206 together coordinate AMP. Residue Lys206 participates in ATP binding. An ADP-binding site is contributed by Gly224. CDP is bound at residue Gly224. Residues Gly225 and Gly297 each coordinate AMP. Gly225, Gly297, and Asn321 together coordinate ATP. The CDP site is built by Gly322 and Phe327. Residue Phe327 coordinates ADP. Glu328 contacts AMP. The ATP site is built by Glu328, Asp359, and Ser360. Asp359 is a binding site for Mg(2+).

This sequence belongs to the phosphoglycerate kinase family. In terms of assembly, monomer. The cofactor is Mg(2+). Expressed in roots, leaves and inflorescence.

It localises to the cytoplasm. It carries out the reaction (2R)-3-phosphoglycerate + ATP = (2R)-3-phospho-glyceroyl phosphate + ADP. The protein operates within carbohydrate degradation; glycolysis; pyruvate from D-glyceraldehyde 3-phosphate: step 2/5. The protein is Phosphoglycerate kinase 3, cytosolic of Arabidopsis thaliana (Mouse-ear cress).